We begin with the raw amino-acid sequence, 289 residues long: Bidirectional sugar transporter SWEET15 (289 aa).

The Extracellular segment spans residues 1–10 (MAMAMANHHT). A helical transmembrane segment spans residues 11-31 (LGLIFGILGNIISFLVYFAPA). The MtN3/slv 1 domain occupies 14–100 (IFGILGNIIS…LYFFYAPMQA (87 aa)). Over 32–45 (PTFYRIYKRKSAEG) the chain is Cytoplasmic. The helical transmembrane segment at 46-66 (FHSLPYIVALFSAMLWLYYAL) threads the bilayer. Residues 67–70 (LKKD) lie on the Extracellular side of the membrane. Residues 71–91 (AFLLITINSFGCAIESFYILL) form a helical membrane-spanning segment. Topologically, residues 92-106 (YFFYAPMQAKKQTLK) are cytoplasmic. A helical membrane pass occupies residues 107-127 (VVISLNVGVFSILVVLIQFLL). The Extracellular portion of the chain corresponds to 128-134 (KGSNRIN). Residues 135–155 (VFGWICASFSVAVFAAPLSIV) form a helical membrane-spanning segment. The MtN3/slv 2 domain occupies 136–219 (FGWICASFSV…VLYGFYRNAG (84 aa)). Residues 156–167 (AKVIRTKSVEFM) are Cytoplasmic-facing. A helical membrane pass occupies residues 168-188 (PFSLSFFLTLSAIMWFAYGLL). Over 189 to 193 (KNDPC) the chain is Extracellular. The helical transmembrane segment at 194-214 (VAIPNILGVILGLVQMVLYGF) threads the bilayer. At 215–289 (YRNAGKEKME…GELQPNGSTV (75 aa)) the chain is on the cytoplasmic side. Residues 249–289 (GAQQNGIKKSGSEDVKDDEETGNREKSTENSGELQPNGSTV) form a disordered region. The segment covering 277 to 289 (ENSGELQPNGSTV) has biased composition (polar residues).

Belongs to the SWEET sugar transporter family. Forms homooligomers and/or heterooligomers.

The protein resides in the cell membrane. Mediates both low-affinity uptake and efflux of sugar across the plasma membrane. This chain is Bidirectional sugar transporter SWEET15, found in Vitis vinifera (Grape).